Here is a 318-residue protein sequence, read N- to C-terminus: Mitochondrial thiamine pyrophosphate carrier 1 (318 aa).

Transmembrane regions (helical) follow at residues glycine 12 to serine 28, leucine 91 to threonine 107, serine 125 to tyrosine 141, glycine 181 to phenylalanine 197, alanine 221 to leucine 237, and glycine 284 to tryptophan 301. Solcar repeat units follow at residues glycine 12–alanine 110, proline 120–valine 206, and proline 214–tyrosine 309.

It belongs to the mitochondrial carrier (TC 2.A.29) family.

The protein resides in the mitochondrion inner membrane. Functionally, mitochondrial transporter that mediates uptake of thiamine pyrophosphate (ThPP) into mitochondria. The chain is Mitochondrial thiamine pyrophosphate carrier 1 (tpc1) from Aspergillus oryzae (strain ATCC 42149 / RIB 40) (Yellow koji mold).